The primary structure comprises 471 residues: Putative pentatricopeptide repeat-containing protein At1g53330 (471 aa).

PPR repeat units follow at residues 46–81 (SLLC…RIVP), 82–116 (TEII…RCQR), 117–147 (TVKS…IDEF), 151–185 (DACT…KVKP), 186–221 (TGVT…GVRP), 222–256 (TVHI…KIKV), 257–291 (DAAI…GCKP), 292–326 (DTVT…GLKP), 327–361 (DVIS…GCSP), and 362–396 (DTLS…GYKP).

It belongs to the PPR family. P subfamily.

Functionally, involved during embryo development. This Arabidopsis thaliana (Mouse-ear cress) protein is Putative pentatricopeptide repeat-containing protein At1g53330.